Reading from the N-terminus, the 386-residue chain is Homeobox protein Hox-A13 (386 aa).

The homeobox DNA-binding region spans 320 to 379; it reads GRKKRVPYTKVQLKELEREYATNKFITKDKRRRISATTNLSERQVTIWFQNRRVKEKKVI.

The protein belongs to the Abd-B homeobox family. Binds DNA as a homodimer. Interacts with MEIS1, MEIS2 and MEIS3.

It localises to the nucleus. Sequence-specific, AT-rich binding transcription factor which is part of a developmental regulatory system that provides cells with specific positional identities on the anterior-posterior axis. The chain is Homeobox protein Hox-A13 (Hoxa13) from Mus musculus (Mouse).